We begin with the raw amino-acid sequence, 221 residues long: MFRPYTIEEGAYLVKLARSTVETFLKTGKIIIPESPPQRLLIDNYGVFTTIETVSGDRYELRGCIGYPEGYKNTLYATIYSAIGACCQDPRFPALRIDELPHVIFEVSILSPLTLLQDDPRKYPELIQVGRHGLVVRRGPYAGLLLPQVAVEECWDAEEFLLHVCMKAWLPGDCWLDRRTKLYIYEAQIFREKTPGGEIYERNLVAETAKCSPKTRRENEQ.

Positions 8-201 (EEGAYLVKLA…EKTPGGEIYE (194 aa)) constitute an AMMECR1 domain.

This chain is Protein Pisl_1005, found in Pyrobaculum islandicum (strain DSM 4184 / JCM 9189 / GEO3).